The chain runs to 146 residues: Holo-[acyl-carrier-protein] synthase (146 aa).

D9 and E63 together coordinate Mg(2+).

Belongs to the P-Pant transferase superfamily. AcpS family. Requires Mg(2+) as cofactor.

It localises to the cytoplasm. It carries out the reaction apo-[ACP] + CoA = holo-[ACP] + adenosine 3',5'-bisphosphate + H(+). Transfers the 4'-phosphopantetheine moiety from coenzyme A to a Ser of acyl-carrier-protein. This chain is Holo-[acyl-carrier-protein] synthase, found in Burkholderia ambifaria (strain ATCC BAA-244 / DSM 16087 / CCUG 44356 / LMG 19182 / AMMD) (Burkholderia cepacia (strain AMMD)).